The primary structure comprises 271 residues: ELH (271 aa).

The first 28 residues, 1–28 (MKRPNNRPTNTMSLILCLTLSSLCVSSQ), serve as a signal peptide directing secretion. 2 consecutive propeptides follow at residues 29–95 (SASV…NEKR) and 162–184 (AAGGMEQSEGQNPETESHSRRKR). Residues 162 to 190 (AAGGMEQSEGQNPETESHSRRKRSVLTPS) form a disordered region. At K241 the chain carries Lysine amide.

It belongs to the molluscan ELH family. In terms of tissue distribution, bag cell neurons.

It is found in the secreted. ELH acts as a neurotransmitter locally, upon neurons of the abdominal ganglion and as a hormone by diffusing into the circulating hemolymph and modulating the activity of other organs. It specifically causes contraction of smooth muscle in the ovotestis and expulsion of the egg string. Functionally, alpha-BCP decreases the activity of a cluster of neurons in the left upper quadrant of the abdominal ganglion. In terms of biological role, beta-BCP specifically excites 2 neurons, L1 and R1, in the abdominal ganglion. The polypeptide is ELH (Aplysia californica (California sea hare)).